The sequence spans 346 residues: Phosphate acyltransferase (346 aa).

This sequence belongs to the PlsX family. In terms of assembly, homodimer. Probably interacts with PlsY.

The protein resides in the cytoplasm. The enzyme catalyses a fatty acyl-[ACP] + phosphate = an acyl phosphate + holo-[ACP]. It functions in the pathway lipid metabolism; phospholipid metabolism. In terms of biological role, catalyzes the reversible formation of acyl-phosphate (acyl-PO(4)) from acyl-[acyl-carrier-protein] (acyl-ACP). This enzyme utilizes acyl-ACP as fatty acyl donor, but not acyl-CoA. This is Phosphate acyltransferase from Synechococcus elongatus (strain ATCC 33912 / PCC 7942 / FACHB-805) (Anacystis nidulans R2).